Reading from the N-terminus, the 439-residue chain is Tol-Pal system protein TolB (439 aa).

An N-terminal signal peptide occupies residues 1-24 (MRNGMRKIIAGVFIFVFLISNLYA).

Belongs to the TolB family. The Tol-Pal system is composed of five core proteins: the inner membrane proteins TolA, TolQ and TolR, the periplasmic protein TolB and the outer membrane protein Pal. They form a network linking the inner and outer membranes and the peptidoglycan layer.

It localises to the periplasm. In terms of biological role, part of the Tol-Pal system, which plays a role in outer membrane invagination during cell division and is important for maintaining outer membrane integrity. This Francisella tularensis subsp. tularensis (strain FSC 198) protein is Tol-Pal system protein TolB.